The following is a 141-amino-acid chain: Nucleoside diphosphate kinase (141 aa).

Positions 11, 59, 87, 93, 104, and 114 each coordinate ATP. Residue His117 is the Pros-phosphohistidine intermediate of the active site.

It belongs to the NDK family. In terms of assembly, homotetramer. Requires Mg(2+) as cofactor.

It is found in the cytoplasm. The enzyme catalyses a 2'-deoxyribonucleoside 5'-diphosphate + ATP = a 2'-deoxyribonucleoside 5'-triphosphate + ADP. It catalyses the reaction a ribonucleoside 5'-diphosphate + ATP = a ribonucleoside 5'-triphosphate + ADP. Major role in the synthesis of nucleoside triphosphates other than ATP. The ATP gamma phosphate is transferred to the NDP beta phosphate via a ping-pong mechanism, using a phosphorylated active-site intermediate. The polypeptide is Nucleoside diphosphate kinase (Delftia acidovorans (strain DSM 14801 / SPH-1)).